A 38-amino-acid chain; its full sequence is Large ribosomal subunit protein bL36 (38 aa).

The protein belongs to the bacterial ribosomal protein bL36 family.

The sequence is that of Large ribosomal subunit protein bL36 from Pseudomonas entomophila (strain L48).